The sequence spans 329 residues: N-acetyl-gamma-glutamyl-phosphate reductase (329 aa).

The active site involves C155.

It belongs to the NAGSA dehydrogenase family. Type 1 subfamily.

The protein resides in the cytoplasm. The catalysed reaction is N-acetyl-L-glutamate 5-semialdehyde + phosphate + NADP(+) = N-acetyl-L-glutamyl 5-phosphate + NADPH + H(+). Its pathway is amino-acid biosynthesis; L-arginine biosynthesis; N(2)-acetyl-L-ornithine from L-glutamate: step 3/4. Its function is as follows. Catalyzes the NADPH-dependent reduction of N-acetyl-5-glutamyl phosphate to yield N-acetyl-L-glutamate 5-semialdehyde. In Shewanella piezotolerans (strain WP3 / JCM 13877), this protein is N-acetyl-gamma-glutamyl-phosphate reductase.